Consider the following 304-residue polypeptide: GTPase Era (304 aa).

An Era-type G domain is found at 11 to 179 (YCGFIAIVGR…QKIVRKSLRE (169 aa)). The tract at residues 19-26 (GRPNVGKS) is G1. A GTP-binding site is contributed by 19-26 (GRPNVGKS). A G2 region spans residues 45–49 (QTTRH). The G3 stretch occupies residues 66–69 (DTPG). Residues 66–70 (DTPGL) and 128–131 (NKVD) each bind GTP. The G4 stretch occupies residues 128–131 (NKVD). The segment at 158-160 (ISA) is G5. The KH type-2 domain maps to 210–287 (TGEELPYSVT…HLELWVKVKA (78 aa)).

This sequence belongs to the TRAFAC class TrmE-Era-EngA-EngB-Septin-like GTPase superfamily. Era GTPase family. Monomer.

The protein resides in the cytoplasm. The protein localises to the cell inner membrane. In terms of biological role, an essential GTPase that binds both GDP and GTP, with rapid nucleotide exchange. Plays a role in 16S rRNA processing and 30S ribosomal subunit biogenesis and possibly also in cell cycle regulation and energy metabolism. The sequence is that of GTPase Era from Actinobacillus pleuropneumoniae serotype 3 (strain JL03).